The following is a 396-amino-acid chain: 1-deoxy-D-xylulose 5-phosphate reductoisomerase (396 aa).

NADPH is bound by residues Thr-10, Gly-11, Ser-12, Ile-13, and Asn-123. Lys-124 is a binding site for 1-deoxy-D-xylulose 5-phosphate. An NADPH-binding site is contributed by Glu-125. Position 149 (Asp-149) interacts with Mn(2+). 1-deoxy-D-xylulose 5-phosphate contacts are provided by Ser-150, Glu-151, Ser-185, and His-208. Glu-151 is a binding site for Mn(2+). NADPH is bound at residue Gly-214. The 1-deoxy-D-xylulose 5-phosphate site is built by Ser-221, Asn-226, Lys-227, and Glu-230. Residue Glu-230 coordinates Mn(2+).

Belongs to the DXR family. Requires Mg(2+) as cofactor. It depends on Mn(2+) as a cofactor.

The catalysed reaction is 2-C-methyl-D-erythritol 4-phosphate + NADP(+) = 1-deoxy-D-xylulose 5-phosphate + NADPH + H(+). The protein operates within isoprenoid biosynthesis; isopentenyl diphosphate biosynthesis via DXP pathway; isopentenyl diphosphate from 1-deoxy-D-xylulose 5-phosphate: step 1/6. Catalyzes the NADPH-dependent rearrangement and reduction of 1-deoxy-D-xylulose-5-phosphate (DXP) to 2-C-methyl-D-erythritol 4-phosphate (MEP). This Shewanella sp. (strain MR-4) protein is 1-deoxy-D-xylulose 5-phosphate reductoisomerase.